The primary structure comprises 152 residues: Transcriptional regulator MraZ (152 aa).

SpoVT-AbrB domains are found at residues 5 to 52 (ATLV…PLPE) and 81 to 124 (ASEC…DETT).

Belongs to the MraZ family. As to quaternary structure, forms oligomers.

It localises to the cytoplasm. The protein resides in the nucleoid. Functionally, negatively regulates its own expression and that of the subsequent genes in the proximal part of the division and cell wall (dcw) gene cluster. Acts by binding directly to DNA. May also regulate the expression of genes outside the dcw cluster. The chain is Transcriptional regulator MraZ from Escherichia coli O45:K1 (strain S88 / ExPEC).